A 209-amino-acid chain; its full sequence is Large ribosomal subunit protein uL4 (209 aa).

The tract at residues 45–77 (RQGTHKAKERAEVTGSTRKIKKQKGTGTARAGS) is disordered.

Belongs to the universal ribosomal protein uL4 family. Part of the 50S ribosomal subunit.

In terms of biological role, one of the primary rRNA binding proteins, this protein initially binds near the 5'-end of the 23S rRNA. It is important during the early stages of 50S assembly. It makes multiple contacts with different domains of the 23S rRNA in the assembled 50S subunit and ribosome. Its function is as follows. Forms part of the polypeptide exit tunnel. This is Large ribosomal subunit protein uL4 from Flavobacterium johnsoniae (strain ATCC 17061 / DSM 2064 / JCM 8514 / BCRC 14874 / CCUG 350202 / NBRC 14942 / NCIMB 11054 / UW101) (Cytophaga johnsonae).